A 294-amino-acid polypeptide reads, in one-letter code: Tryptophan 2,3-dioxygenase 1 (294 aa).

Residues 1 to 20 (MSEPIQPTRPAASGCPMHGA) form a disordered region. Substrate is bound by residues 63–67 (FIVQH), Tyr-125, and Arg-129. His-252 provides a ligand contact to heme. Thr-266 contacts substrate.

It belongs to the tryptophan 2,3-dioxygenase family. Homotetramer. Heme is required as a cofactor.

It catalyses the reaction L-tryptophan + O2 = N-formyl-L-kynurenine. The protein operates within amino-acid degradation; L-tryptophan degradation via kynurenine pathway; L-kynurenine from L-tryptophan: step 1/2. In terms of biological role, heme-dependent dioxygenase that catalyzes the oxidative cleavage of the L-tryptophan (L-Trp) pyrrole ring and converts L-tryptophan to N-formyl-L-kynurenine. Catalyzes the oxidative cleavage of the indole moiety. This chain is Tryptophan 2,3-dioxygenase 1, found in Ralstonia nicotianae (strain ATCC BAA-1114 / GMI1000) (Ralstonia solanacearum).